A 155-amino-acid chain; its full sequence is MRCPFCGNIDTQVKDSRPAEDHVSIRRRRFCPACGGRFTTYERVQLRDLVVIKSSGKREDFDRTKLERSIRIAMQKRPIEPERIDQMISGIVRRLESLGDTDIPSKVIGEIVMESLARIDTVAYVRFASVYKNFQAADDFDKFVSELRPTAPAEE.

The segment at 3-34 (CPFCGNIDTQVKDSRPAEDHVSIRRRRFCPAC) is a zinc-finger region. In terms of domain architecture, ATP-cone spans 49 to 139 (LVVIKSSGKR…VYKNFQAADD (91 aa)).

This sequence belongs to the NrdR family. Requires Zn(2+) as cofactor.

Negatively regulates transcription of bacterial ribonucleotide reductase nrd genes and operons by binding to NrdR-boxes. This Cereibacter sphaeroides (strain ATCC 17025 / ATH 2.4.3) (Rhodobacter sphaeroides) protein is Transcriptional repressor NrdR.